Consider the following 339-residue polypeptide: Phenylalanine--tRNA ligase alpha subunit (339 aa).

A Mg(2+)-binding site is contributed by Glu-254.

It belongs to the class-II aminoacyl-tRNA synthetase family. Phe-tRNA synthetase alpha subunit type 1 subfamily. Tetramer of two alpha and two beta subunits. Requires Mg(2+) as cofactor.

It is found in the cytoplasm. The enzyme catalyses tRNA(Phe) + L-phenylalanine + ATP = L-phenylalanyl-tRNA(Phe) + AMP + diphosphate + H(+). This chain is Phenylalanine--tRNA ligase alpha subunit, found in Lachnoclostridium phytofermentans (strain ATCC 700394 / DSM 18823 / ISDg) (Clostridium phytofermentans).